The chain runs to 420 residues: ATP-dependent Clp protease ATP-binding subunit ClpX (420 aa).

The ClpX-type ZB domain maps to Lys-3–His-57. 4 residues coordinate Zn(2+): Cys-16, Cys-19, Cys-38, and Cys-41. Pro-122 to Leu-129 provides a ligand contact to ATP.

It belongs to the ClpX chaperone family. As to quaternary structure, component of the ClpX-ClpP complex. Forms a hexameric ring that, in the presence of ATP, binds to fourteen ClpP subunits assembled into a disk-like structure with a central cavity, resembling the structure of eukaryotic proteasomes.

Functionally, ATP-dependent specificity component of the Clp protease. It directs the protease to specific substrates. Can perform chaperone functions in the absence of ClpP. This Leptospira borgpetersenii serovar Hardjo-bovis (strain L550) protein is ATP-dependent Clp protease ATP-binding subunit ClpX.